A 262-amino-acid chain; its full sequence is MRALAIAATGMDAQQTNLEVIANNIANINTTGYKRARAEFTDLLYQTERMQGVPNRANQAIVPEGANIGLGVQTSAVRNIHTQGNLIETGNKLDVAIIGQGWFQIEAADGSTLYSRAGAFNKNADGNLVTVDGYNVIPNINIPTDAQDITITRTGQVTARIGNAADFTQLGQLTIANFANEAGLKPLGDNLFSQTPASGAPVVGVPDDPSYGYVKQSYLEGSNVDAVKEITDLITAQRAYEMNSKVITTADEMASIVSKNLK.

The protein belongs to the flagella basal body rod proteins family. As to quaternary structure, the basal body constitutes a major portion of the flagellar organelle and consists of four rings (L,P,S, and M) mounted on a central rod. The rod consists of about 26 subunits of FlgG in the distal portion, and FlgB, FlgC and FlgF are thought to build up the proximal portion of the rod with about 6 subunits each.

It localises to the bacterial flagellum basal body. In Agrobacterium fabrum (strain C58 / ATCC 33970) (Agrobacterium tumefaciens (strain C58)), this protein is Flagellar basal-body rod protein FlgG (flgG).